The chain runs to 670 residues: Solute carrier organic anion transporter family member 1A1 (670 aa).

The Cytoplasmic portion of the chain corresponds to 1 to 20; the sequence is MEETEKKVATQEGRFFSKMK. Residues 21–40 traverse the membrane as a helical segment; it reads VFLMSLTCAYLAKSLSGVYM. The Extracellular portion of the chain corresponds to 41–59; that stretch reads NSMLTQIERQFGIPTSVVG. Residues 60–80 traverse the membrane as a helical segment; that stretch reads FITGSFEIGNLLLIVFVSYFG. The Cytoplasmic segment spans residues 81–86; sequence RKLHRP. A helical transmembrane segment spans residues 87 to 111; it reads IIIGVGCVVMGLGCFLMASPHFLMG. Residues 112 to 155 lie on the Extracellular side of the membrane; the sequence is RYKYETTISPTSNLSSNSFLCIENRTQTLKPTQDPTECVKEIKS. N-linked (GlcNAc...) asparagine glycans are attached at residues Asn-124 and Asn-135. Residues 156 to 184 traverse the membrane as a helical segment; the sequence is LMWIYVLIGNTMRGIGETPIMPLGISYIE. Residues 185–203 lie on the Cytoplasmic side of the membrane; sequence DFAKSENSPLYIGILEMGK. A helical membrane pass occupies residues 204-224; sequence IVGPIIGLLLGSFFARVYVDI. The Extracellular segment spans residues 225–242; that stretch reads GSVNTDDLTITPTDTRWV. A helical membrane pass occupies residues 243 to 267; sequence GAWWIGFLVCAGVNILTSIPFFFFP. The Cytoplasmic segment spans residues 268 to 311; it reads KTLPKKELQDNVDVTKYEKVEKHRERAKKENLGITKDFLPFMKS. The helical transmembrane segment at 312–333 threads the bilayer; sequence LCCNPIYMLFSLTSVLQINGFA. Topologically, residues 334–353 are extracellular; sequence STFTFLPKYLEQQYGKSTSE. A helical transmembrane segment spans residues 354-377; it reads AVFLIGVYSLPPVCLGYLISGFIM. The Cytoplasmic segment spans residues 378 to 381; it reads KKFK. A helical membrane pass occupies residues 382 to 405; the sequence is ITVKKAAYIAFGLSLSEYFIFLCN. Over 406 to 513 the chain is Extracellular; sequence YLLTCDNFPV…PECDNKLQYF (108 aa). The 56-residue stretch at 433 to 488 folds into the Kazal-like domain; that stretch reads KNVLADCNTRCSCLTDTWDPVCGDNGLAYMSACLAGCEKSVGTGTNMVFQNCSCIG. Disulfide bonds link Cys-439–Cys-469, Cys-445–Cys-465, and Cys-454–Cys-486. N-linked (GlcNAc...) asparagine glycosylation is found at Asn-483 and Asn-492. A helical membrane pass occupies residues 514-536; it reads LIKSVFSSFIFSLAAIPGYMVLL. The Cytoplasmic segment spans residues 537-545; that stretch reads RCVKSEEKS. The helical transmembrane segment at 546-571 threads the bilayer; that stretch reads IGVGLHAFFIRLLAGIPAPVYFGALI. Over 572-605 the chain is Extracellular; that stretch reads DRTCLHWGTLKCGQPGACRMYDINRFRHIYLGLP. A helical transmembrane segment spans residues 606-623; that stretch reads AAVRGSSFLPAVFILILM. Residues 624–670 are Cytoplasmic-facing; sequence RKFHFPGDIHSPDTELAEMKLTEKESECTDVCRSPKVENDGELKTKL. Phosphoserine is present on Ser-634.

Belongs to the organo anion transporter (TC 2.A.60) family. Binds to PDZK1. Interaction with PDZK1 is required for expression on hepatocyte surface. Highly expressed in liver, and at lower levels in kidney. Not detected in other tissues.

It localises to the basolateral cell membrane. The enzyme catalyses estrone 3-sulfate(out) + hydrogencarbonate(in) = estrone 3-sulfate(in) + hydrogencarbonate(out). It carries out the reaction taurocholate(out) + hydrogencarbonate(in) = taurocholate(in) + hydrogencarbonate(out). The catalysed reaction is L-thyroxine(out) = L-thyroxine(in). It catalyses the reaction prostaglandin E2(out) = prostaglandin E2(in). The enzyme catalyses 17beta-estradiol 17-O-(beta-D-glucuronate)(out) = 17beta-estradiol 17-O-(beta-D-glucuronate)(in). It carries out the reaction dehydroepiandrosterone 3-sulfate(out) = dehydroepiandrosterone 3-sulfate(in). Its function is as follows. Mediates the Na(+)-independent transport of organic anions such as steroid sulfate conjugates (dehydroepiandrosterone sulfate (DHEAS), 17-beta-glucuronosyl estradiol, estrone-3-sulfate), conjugated (taurocholate) and unconjugated (cholate) bile acids, prostaglandin E2 (PGE2) and L-thyroxine T4. Also capable of transporting sulfobromophthalein (BSP), ouabain and gadoxetate. Hydrogencarbonate/HCO3(-) acts as the probable counteranion that exchanges for organic anions. Shows a pH-sensitive substrate specificity which may be ascribed to the protonation state of the binding site and leads to a stimulation of substrate transport in an acidic microenvironment. This chain is Solute carrier organic anion transporter family member 1A1, found in Mus musculus (Mouse).